We begin with the raw amino-acid sequence, 591 residues long: Cytidine monophosphate-N-acetylneuraminic acid hydroxylase (591 aa).

Residues 16–114 form the Rieske domain; the sequence is LASAEVESLK…IENDDENGVS (99 aa). Residues Cys56, His58, Cys77, and His80 each contribute to the [2Fe-2S] cluster site.

The protein belongs to the CMP-Neu5Ac hydroxylase family. The cofactor is [2Fe-2S] cluster.

The protein resides in the cytoplasm. The enzyme catalyses CMP-N-acetyl-beta-neuraminate + 2 Fe(II)-[cytochrome b5] + O2 + 2 H(+) = CMP-N-glycoloyl-beta-neuraminate + 2 Fe(III)-[cytochrome b5] + H2O. Its pathway is amino-sugar metabolism; N-acetylneuraminate metabolism. Sialic acids are components of carbohydrate chains of glycoconjugates and are involved in cell-cell recognition and cell-pathogen interactions. Catalyzes the conversion of CMP-N-acetylneuraminic acid (CMP-Neu5Ac) into its hydroxylated derivative CMP-N-glycolylneuraminic acid (CMP-Neu5Gc), a sialic acid abundantly expressed at the surface of many cells. The protein is Cytidine monophosphate-N-acetylneuraminic acid hydroxylase (cmah) of Xenopus laevis (African clawed frog).